Reading from the N-terminus, the 523-residue chain is Xanthotoxin 5-hydroxylase CYP82C2 (523 aa).

The chain crosses the membrane as a helical span at residues 1–21 (MDTSLFSLFVPILVFVFIALF). Cys462 provides a ligand contact to heme.

This sequence belongs to the cytochrome P450 family. Requires heme as cofactor.

Its subcellular location is the membrane. It catalyses the reaction xanthotoxin + reduced [NADPH--hemoprotein reductase] + O2 = 5-hydroxyxanthotoxin + oxidized [NADPH--hemoprotein reductase] + H2O + 2 H(+). The catalysed reaction is indole-3-carbonyl nitrile + reduced [NADPH--hemoprotein reductase] + O2 = 4-hydroxy-indole-3-carbonyl nitrile + oxidized [NADPH--hemoprotein reductase] + H2O + H(+). Functionally, involved in the biosynthetic pathway to 4-hydroxyindole-3-carbonyl nitrile (4-OH-ICN), a cyanogenic metabolite required for inducible pathogen defense. Converts indole-3-carbonyl nitrile (ICN) into 4-OH-ICN. Can hydroxylate xanthotoxin (8-methoxypsoralen) to form 5-hydroxyxanthotoxin (5-hydroxy-8-methoxypsoralen) in vivo and in vitro. The sequence is that of Xanthotoxin 5-hydroxylase CYP82C2 from Arabidopsis thaliana (Mouse-ear cress).